Here is a 547-residue protein sequence, read N- to C-terminus: Chaperonin GroEL (547 aa).

Residues 30-33 (TLGP), Lys51, 87-91 (DGTTT), Gly415, 479-481 (NAA), and Asp495 each bind ATP. Residues 524-547 (APKKDEPTPPAAGGGMGGMGGMDF) are disordered. Positions 535–547 (AGGGMGGMGGMDF) are enriched in gly residues.

It belongs to the chaperonin (HSP60) family. As to quaternary structure, forms a cylinder of 14 subunits composed of two heptameric rings stacked back-to-back. Interacts with the co-chaperonin GroES.

It localises to the cytoplasm. The enzyme catalyses ATP + H2O + a folded polypeptide = ADP + phosphate + an unfolded polypeptide.. Together with its co-chaperonin GroES, plays an essential role in assisting protein folding. The GroEL-GroES system forms a nano-cage that allows encapsulation of the non-native substrate proteins and provides a physical environment optimized to promote and accelerate protein folding. In Xylella fastidiosa (strain 9a5c), this protein is Chaperonin GroEL.